A 520-amino-acid chain; its full sequence is Hydroxymethylglutaryl-CoA synthase, cytoplasmic (520 aa).

Phosphoserine is present on Ser-4. Ala-44 is a (3S)-3-hydroxy-3-methylglutaryl-CoA binding site. A CoA-binding site is contributed by 44–46; sequence AGK. Position 46 is an N6-acetyllysine (Lys-46). The active-site Proton donor/acceptor is Glu-95. The (3S)-3-hydroxy-3-methylglutaryl-CoA site is built by Cys-129, Asn-167, Thr-171, Ser-221, and His-264. Cys-129 acts as the Acyl-thioester intermediate in catalysis. Asn-167 is a CoA binding site. A CoA-binding site is contributed by Ser-221. His-264 functions as the Proton donor/acceptor in the catalytic mechanism. CoA is bound by residues Lys-269 and Lys-273. Positions 273, 343, and 377 each coordinate (3S)-3-hydroxy-3-methylglutaryl-CoA. Lys-273 is subject to N6-acetyllysine. Thr-476 bears the Phosphothreonine mark. The tract at residues 492-520 is disordered; sequence HIPSPAKKVPRLPATAAEPEAAVISNGEH. 2 positions are modified to phosphoserine: Ser-495 and Ser-516.

The protein belongs to the thiolase-like superfamily. HMG-CoA synthase family. In terms of assembly, homodimer.

The protein resides in the cytoplasm. The catalysed reaction is acetoacetyl-CoA + acetyl-CoA + H2O = (3S)-3-hydroxy-3-methylglutaryl-CoA + CoA + H(+). Its pathway is metabolic intermediate biosynthesis; (R)-mevalonate biosynthesis; (R)-mevalonate from acetyl-CoA: step 2/3. In terms of biological role, catalyzes the condensation of acetyl-CoA with acetoacetyl-CoA to form HMG-CoA, which is converted by HMG-CoA reductase (HMGCR) into mevalonate, a precursor for cholesterol synthesis. This chain is Hydroxymethylglutaryl-CoA synthase, cytoplasmic, found in Pongo abelii (Sumatran orangutan).